The following is a 321-amino-acid chain: Bifunctional ligase/repressor BirA (321 aa).

The H-T-H motif DNA-binding region spans 22-41; sequence GEQLGETLGMSRAAINKHIQ. The 188-residue stretch at 67-254 folds into the BPL/LPL catalytic domain; that stretch reads LNAKQILGQL…ELRAALELFE (188 aa). Biotin is bound by residues 89–91, Gln-112, 116–118, and Lys-183; these read STN and RGR.

It belongs to the biotin--protein ligase family. Monomer in solution. Interacts with BCCP. Homodimerizes to bind DNA. Interaction with the corepressor bio-5'-AMP increases dimerization.

The enzyme catalyses biotin + L-lysyl-[protein] + ATP = N(6)-biotinyl-L-lysyl-[protein] + AMP + diphosphate + H(+). With respect to regulation, the switch between the enzymatic activity and the repressor activity is regulated by cellular demand for biotin. The switch occurs by swapping of protein interaction partners by holoBirA. In conditions of high biotin demand, holoBirA associates with apoBCCP to transfer biotin. In conditions of low biotin demand, holoBirA dimerizes, binds DNA and represses transcription of the biotin operon. Acts both as a biotin--[acetyl-CoA-carboxylase] ligase and a biotin-operon repressor. In the presence of ATP, BirA activates biotin to form the BirA-biotinyl-5'-adenylate (BirA-bio-5'-AMP or holoBirA) complex. HoloBirA can either transfer the biotinyl moiety to the biotin carboxyl carrier protein (BCCP) subunit of acetyl-CoA carboxylase, or bind to the biotin operator site and inhibit transcription of the operon. This Escherichia coli (strain K12) protein is Bifunctional ligase/repressor BirA.